Reading from the N-terminus, the 437-residue chain is tRNA-2-methylthio-N(6)-dimethylallyladenosine synthase (437 aa).

The MTTase N-terminal domain maps to Met-1–Ala-115. Cys-10, Cys-46, Cys-78, Cys-148, Cys-152, and Cys-155 together coordinate [4Fe-4S] cluster. Residues Lys-134–Glu-367 form the Radical SAM core domain. The 67-residue stretch at Lys-370–Gly-436 folds into the TRAM domain.

It belongs to the methylthiotransferase family. MiaB subfamily. In terms of assembly, monomer. The cofactor is [4Fe-4S] cluster.

The protein localises to the cytoplasm. It catalyses the reaction N(6)-dimethylallyladenosine(37) in tRNA + (sulfur carrier)-SH + AH2 + 2 S-adenosyl-L-methionine = 2-methylsulfanyl-N(6)-dimethylallyladenosine(37) in tRNA + (sulfur carrier)-H + 5'-deoxyadenosine + L-methionine + A + S-adenosyl-L-homocysteine + 2 H(+). In terms of biological role, catalyzes the methylthiolation of N6-(dimethylallyl)adenosine (i(6)A), leading to the formation of 2-methylthio-N6-(dimethylallyl)adenosine (ms(2)i(6)A) at position 37 in tRNAs that read codons beginning with uridine. The polypeptide is tRNA-2-methylthio-N(6)-dimethylallyladenosine synthase (Helicobacter pylori (strain P12)).